A 535-amino-acid chain; its full sequence is CTP synthase (535 aa).

Positions 1–267 (MTKYIFVTGG…DQIVCDHLKL (267 aa)) are amidoligase domain. A CTP-binding site is contributed by serine 13. Serine 13 is a binding site for UTP. 14–19 (SLGKGI) lines the ATP pocket. Tyrosine 54 provides a ligand contact to L-glutamine. An ATP-binding site is contributed by aspartate 71. Aspartate 71 and glutamate 141 together coordinate Mg(2+). CTP is bound by residues 148–150 (DIE), 188–193 (KTKPTQ), and lysine 224. UTP-binding positions include 188 to 193 (KTKPTQ) and lysine 224. Residue 240–242 (RDA) participates in ATP binding. The region spanning 292-534 (KIALVGKYVE…VSASITNKES (243 aa)) is the Glutamine amidotransferase type-1 domain. Residue glycine 354 coordinates L-glutamine. The Nucleophile; for glutamine hydrolysis role is filled by cysteine 381. L-glutamine-binding positions include 382 to 385 (LGMQ), glutamate 405, and arginine 462. Catalysis depends on residues histidine 507 and glutamate 509.

This sequence belongs to the CTP synthase family. Homotetramer.

The catalysed reaction is UTP + L-glutamine + ATP + H2O = CTP + L-glutamate + ADP + phosphate + 2 H(+). It carries out the reaction L-glutamine + H2O = L-glutamate + NH4(+). It catalyses the reaction UTP + NH4(+) + ATP = CTP + ADP + phosphate + 2 H(+). Its pathway is pyrimidine metabolism; CTP biosynthesis via de novo pathway; CTP from UDP: step 2/2. With respect to regulation, allosterically activated by GTP, when glutamine is the substrate; GTP has no effect on the reaction when ammonia is the substrate. The allosteric effector GTP functions by stabilizing the protein conformation that binds the tetrahedral intermediate(s) formed during glutamine hydrolysis. Inhibited by the product CTP, via allosteric rather than competitive inhibition. Its function is as follows. Catalyzes the ATP-dependent amination of UTP to CTP with either L-glutamine or ammonia as the source of nitrogen. Regulates intracellular CTP levels through interactions with the four ribonucleotide triphosphates. The chain is CTP synthase from Bacillus mycoides (strain KBAB4) (Bacillus weihenstephanensis).